The chain runs to 381 residues: DNA replication and repair protein RecF (381 aa).

30–37 is an ATP binding site; that stretch reads GENAQGKT.

The protein belongs to the RecF family.

The protein localises to the cytoplasm. Its function is as follows. The RecF protein is involved in DNA metabolism; it is required for DNA replication and normal SOS inducibility. RecF binds preferentially to single-stranded, linear DNA. It also seems to bind ATP. The sequence is that of DNA replication and repair protein RecF from Lactobacillus delbrueckii subsp. bulgaricus (strain ATCC 11842 / DSM 20081 / BCRC 10696 / JCM 1002 / NBRC 13953 / NCIMB 11778 / NCTC 12712 / WDCM 00102 / Lb 14).